Consider the following 437-residue polypeptide: Na(+)/H(+) antiporter NhaA (437 aa).

Helical transmembrane passes span 12–32 (SMNI…AVIA), 65–85 (LTMI…MVGL), 103–123 (ALPF…YSMV), 133–153 (GLAI…SLLG), 162–182 (IFLT…IAIF), 186–206 (HVAY…YFIG), 214–234 (IFFL…GIHS), 308–328 (GAVN…VMFS), 333–353 (VIGG…FLGI), 377–397 (ISGV…IANL), and 412–432 (LGVL…LHWV).

This sequence belongs to the NhaA Na(+)/H(+) (TC 2.A.33) antiporter family.

It is found in the cell inner membrane. It carries out the reaction Na(+)(in) + 2 H(+)(out) = Na(+)(out) + 2 H(+)(in). Its function is as follows. Na(+)/H(+) antiporter that extrudes sodium in exchange for external protons. The chain is Na(+)/H(+) antiporter NhaA from Bacteroides fragilis (strain YCH46).